We begin with the raw amino-acid sequence, 57 residues long: Large ribosomal subunit protein bL32 (57 aa).

It belongs to the bacterial ribosomal protein bL32 family.

This Staphylococcus aureus (strain MSSA476) protein is Large ribosomal subunit protein bL32.